Here is a 557-residue protein sequence, read N- to C-terminus: Portal protein (557 aa).

The protein belongs to the herpesviridae portal protein family. Homododecamerizes. Interacts with terminase subunits TRM1 and TRM3.

The protein resides in the virion. It is found in the host nucleus. Its function is as follows. Forms a portal in the viral capsid through which viral DNA is translocated during DNA packaging. Assembles as a dodecamer at a single fivefold axe of the T=16 icosahedric capsid. Binds to the molecular motor that translocates the viral DNA, termed terminase. This chain is Portal protein (43), found in Connochaetes taurinus (Blue wildebeest).